The chain runs to 911 residues: Disks large homolog 1 (911 aa).

An L27 domain is found at 4–64 (RKQDTQRALH…FYEVTLLDNP (61 aa)). A Phosphoserine; by CaMK2 modification is found at Ser-39. The segment at 70–105 (SKQCEPVQPGNPWESGSLSSAAVTSESLPGGLSPPV) is disordered. The span at 83 to 96 (ESGSLSSAAVTSES) shows a compositional bias: polar residues. Residues Ser-122, Ser-138, and Ser-158 each carry the phosphoserine modification. An interaction with SH3 domains region spans residues 162 to 212 (PTEAVPPSSPIVPVTPALPVPAESPVVLPSTPQANPPPVLVNTDSLETPTY). PDZ domains are found at residues 224 to 310 (EITL…VKRR) and 318 to 404 (EIKL…AAKP). The interval 224–545 (EITLERGNSG…QAVTIVAQYR (322 aa)) is required for interaction with MARCHF2. Ser-232 bears the Phosphoserine; by CaMK2 mark. Phosphotyrosine is present on Tyr-398. Over residues 419–441 (TNSSSQSVDNHVSPSSYLGQTPA) the composition is skewed to polar residues. The tract at residues 419-443 (TNSSSQSVDNHVSPSSYLGQTPASP) is disordered. Residues 465–545 (KVVLHRGSTG…QAVTIVAQYR (81 aa)) enclose the PDZ 3 domain. Ser-567, Ser-572, Ser-574, Ser-578, Ser-597, Ser-618, Ser-684, Ser-687, and Ser-841 each carry phosphoserine. Positions 580-650 (KRSLYVRALF…PSKRRVEKKE (71 aa)) constitute an SH3 domain. A disordered region spans residues 662 to 696 (KTRGDKGEIPDDMGSKGLKHVTSNASDSESSYHEY). Residues 721-896 (TRPVIILGPM…IYNQVKQIIE (176 aa)) form the Guanylate kinase-like domain.

The protein belongs to the MAGUK family. As to quaternary structure, homotetramer. Interacts (via guanylate kinase-like domain) with DLGAP1, DLGAP2, DLGAP3, DLGAP4 and MAP1A. Interacts (via guanylate kinase-like domain) with KIF13B. May interact with HTR2A. Interacts (via PDZ domains) with GRIA1. Interacts (via PDZ domains) with GRIN2A. Interacts (via PDZ domains) with KCND2 and KCND3. Interacts (via PDZ domains) with KCNA1, KCNA2, KCNA3 and KCNA4. Interacts (via PDZ domains) with ADGRA3. Interacts with KCNF1. Interacts with CAMK2. Interacts with cytoskeleton-associated protein EPB41. Interacts with cytoskeleton-associated protein EZR. Found in a complex with KCNA5 and CAV3. Found in a complex with APC and CTNNB1. Interacts (via PDZ domains) with APC. Interacts with CDH1 through binding to PIK3R1. Forms multiprotein complexes with CASK, LIN7A, LIN7B, LIN7C, APBA1, and KCNJ12. Interacts with TOPK. Forms a tripartite complex composed of DLG1, MPP7 and LIN7 (LIN7A or LIN7C). May interact with TJAP1. Interacts with PTEN. Interacts with FRMPD4 (via C-terminus). Interacts with LRFN1 and LRFN2. Interacts with LRFN4 and SFPQ. Interacts (via PDZ domains) with ADGRA2 (via PDZ-binding motif). Interacts with ADAM10; this interaction recruits ADAM10 to the cell membrane during long-term depression in hippocampal neurons. Interacts with DGKI (via PDZ-binding motif). Interacts (via PDZ domains) with MARCHF2 (via PDZ domain); the interaction leads to DLG1 ubiqtuitination and degradation. Interacts (via N-terminus) with MPP3; this interaction connects CADM1 with DLG1 and links CADM1 with the regulatory subunit of phosphoinositide-3-kinase (PI3K) by forming a multiprotein complex and participates in cell spreading. Phosphorylated by MAPK12. Phosphorylation of Ser-39 modulates transport to the plasma membrane. Phosphorylation of Ser-232 regulates association with GRIN2A. In terms of processing, ubiquitinated; by MARCHF2 which results in its degradation. Widely expressed. Strongly expressed in epithelial cells, in the small intestine it is only detected in the vili. Expressed in brain, heart (at protein level), muscle, lung and liver. In the brain it was detected in olfactory bulbs, cerebral cortex, hippocampus, and spinal cord (at protein level).

The protein localises to the cell membrane. It is found in the basolateral cell membrane. Its subcellular location is the endoplasmic reticulum membrane. It localises to the postsynaptic density. The protein resides in the synapse. The protein localises to the sarcolemma. It is found in the cell junction. Its subcellular location is the cytoplasm. It localises to the apical cell membrane. Its function is as follows. Essential multidomain scaffolding protein required for normal development. Recruits channels, receptors and signaling molecules to discrete plasma membrane domains in polarized cells. Promotes epithelial cell layer barrier function via maintaining cell-cell adhesion. May play a role in adherens junction assembly, signal transduction, cell proliferation, synaptogenesis and lymphocyte activation. Regulates the excitability of cardiac myocytes by modulating the functional expression of Kv4 channels. Functional regulator of Kv1.5 channel. During long-term depression in hippocampal neurons, it recruits ADAM10 to the plasma membrane. The sequence is that of Disks large homolog 1 from Rattus norvegicus (Rat).